Consider the following 319-residue polypeptide: Mitochondrial thiamine pyrophosphate carrier 1 (319 aa).

3 Solcar repeats span residues 12–110, 121–207, and 214–309; these read GQRY…VTQS, PQPA…VRVP, and PFGS…VLKI. Helical transmembrane passes span 17 to 35, 91 to 107, 127 to 147, 182 to 201, 221 to 237, and 284 to 301; these read VVAA…VAPL, LLYI…YRTV, FVSG…FDLL, GVSA…FATY, TAGV…VFPL, and GLTV…VTMW.

Belongs to the mitochondrial carrier (TC 2.A.29) family.

It is found in the mitochondrion inner membrane. In terms of biological role, mitochondrial transporter that mediates uptake of thiamine pyrophosphate (ThPP) into mitochondria. This Coccidioides immitis (strain RS) (Valley fever fungus) protein is Mitochondrial thiamine pyrophosphate carrier 1 (TPC1).